Reading from the N-terminus, the 252-residue chain is Imidazole glycerol phosphate synthase subunit HisF (252 aa).

Residues Asp11 and Asp130 contribute to the active site.

Belongs to the HisA/HisF family. Heterodimer of HisH and HisF.

It localises to the cytoplasm. The enzyme catalyses 5-[(5-phospho-1-deoxy-D-ribulos-1-ylimino)methylamino]-1-(5-phospho-beta-D-ribosyl)imidazole-4-carboxamide + L-glutamine = D-erythro-1-(imidazol-4-yl)glycerol 3-phosphate + 5-amino-1-(5-phospho-beta-D-ribosyl)imidazole-4-carboxamide + L-glutamate + H(+). Its pathway is amino-acid biosynthesis; L-histidine biosynthesis; L-histidine from 5-phospho-alpha-D-ribose 1-diphosphate: step 5/9. Functionally, IGPS catalyzes the conversion of PRFAR and glutamine to IGP, AICAR and glutamate. The HisF subunit catalyzes the cyclization activity that produces IGP and AICAR from PRFAR using the ammonia provided by the HisH subunit. The chain is Imidazole glycerol phosphate synthase subunit HisF from Bacillus anthracis (strain CDC 684 / NRRL 3495).